Here is a 380-residue protein sequence, read N- to C-terminus: Cytochrome b (380 aa).

Transmembrane regions (helical) follow at residues 34–54, 78–99, 114–134, and 179–199; these read FGSL…FLAM, WLLR…YFHI, WNIG…GYVL, and FFTF…IHLL. Heme b-binding residues include H84 and H98. H183 and H197 together coordinate heme b. H202 provides a ligand contact to a ubiquinone. 4 helical membrane-spanning segments follow: residues 227 to 247, 289 to 309, 321 to 341, and 348 to 368; these read YKDL…STFA, LGGV…PIIH, IAKT…WIGG, and FITI…LLIP.

This sequence belongs to the cytochrome b family. As to quaternary structure, the cytochrome bc1 complex contains 3 respiratory subunits (MT-CYB, CYC1 and UQCRFS1), 2 core proteins (UQCRC1 and UQCRC2) and probably 6 low-molecular weight proteins. Heme b is required as a cofactor.

The protein localises to the mitochondrion inner membrane. Component of the ubiquinol-cytochrome c reductase complex (complex III or cytochrome b-c1 complex) that is part of the mitochondrial respiratory chain. The b-c1 complex mediates electron transfer from ubiquinol to cytochrome c. Contributes to the generation of a proton gradient across the mitochondrial membrane that is then used for ATP synthesis. The protein is Cytochrome b (mt-cyb) of Pelophylax nigromaculatus (Black-spotted frog).